The sequence spans 117 residues: Prefoldin subunit beta (117 aa).

Belongs to the prefoldin subunit beta family. In terms of assembly, heterohexamer of two alpha and four beta subunits.

It is found in the cytoplasm. In terms of biological role, molecular chaperone capable of stabilizing a range of proteins. Seems to fulfill an ATP-independent, HSP70-like function in archaeal de novo protein folding. In Methanosarcina barkeri (strain Fusaro / DSM 804), this protein is Prefoldin subunit beta.